The following is a 402-amino-acid chain: uncharacterized protein (402 aa).

The Cytoplasmic portion of the chain corresponds to M1 to N12. The chain crosses the membrane as a helical span at residues A13–T33. Topologically, residues K34–Q50 are extracellular. The chain crosses the membrane as a helical span at residues F51 to F71. Residues Y72–L103 are Cytoplasmic-facing. A helical membrane pass occupies residues I104–V124. The Extracellular segment spans residues G125–S134. A helical transmembrane segment spans residues L135–L155. The Cytoplasmic segment spans residues Q156 to K165. The helical transmembrane segment at I166–Q186 threads the bilayer. Over E187–V206 the chain is Extracellular. A helical transmembrane segment spans residues I207–F227. Residues T228–L271 are Cytoplasmic-facing. The chain crosses the membrane as a helical span at residues T272–L292. The Extracellular segment spans residues E293–R353. A helical membrane pass occupies residues F354–F374. Residues G375–E402 lie on the Cytoplasmic side of the membrane.

The protein belongs to the TPT transporter family.

It localises to the membrane. This is an uncharacterized protein from Saccharomyces cerevisiae (strain ATCC 204508 / S288c) (Baker's yeast).